The primary structure comprises 732 residues: MHCHNDDVRFSSSSIRIHSPSPKEQHSLLTNLQSCSKTFVSHLSNTRNSLNQMLQSLKNRHTPPPRSVRRPNLPTQMLNSVTQLMIGKSSPISLSLIQSTQFNWSESRDENVETIRGLSSPLLCCASLSLTRPNESTQSVEGKDTVQQQKGHSVSRNAEERVLISEVLVRTKDGEELERKDLEMEALAALKACRANSALTIREVQEDVHRIIESGYFCSCTPVAVDTRDGIRLMFQVEPNQEFRGLVCENANVLPSKFIHEAFRDGFGKVINIKRLEEAITSINGWYMERGLFGIVSDIDTLSGGIVRLQVAEAEVNNISIRFLDRKTGEPTKGKTSPETILRQLTTKKGQVYSMLQGKRDVDTVLAMGIMEDVSIIPQPAGDSGKVDLIMNCVERPSGGFSAGGGISSGITSGPLSGLIGSFAYSHRNLFGRNQKLNVSLERGQIDSIFRINYTDPWIEGDDKRTSRSIMVQNSRTPGNLVHGNQPDNSSLTIGRVTAGVEYSRPFRPKWNGTAGLIFQHAGARDEQGNPIIKDFYSSPLTASGKPHDETMLAKLESIYTGSGDQGSTMFAFNMEQGLPVLPEWLCFNRVTGRARKGIHIGPARFLFSLSGGHVVGKFSPHEAFVIGGTNSVRGYEEGAVGSGRSYVVGSGELSFPVRGPVEGVIFTDYGTDMGSGSTVPGDPAGARLKPGSGYGYGLGVRVDSPLGPLRLEYAFNDQHAGRFHFGVGLRN.

2 disordered regions span residues Met1–Lys23 and Glu135–Val154. Residues Ser11–Pro20 are compositionally biased toward low complexity. Residues Ala314–Arg396 enclose the POTRA domain.

This sequence belongs to the OEP80 (TC 1.B.33.2) family.

The protein resides in the plastid. It is found in the chloroplast outer membrane. Plays an essential role during early stages of plastid development. This is Outer envelope protein 80, chloroplastic (OEP80) from Arabidopsis thaliana (Mouse-ear cress).